The chain runs to 302 residues: Protoheme IX farnesyltransferase 2 (302 aa).

9 helical membrane passes run 14 to 34 (IIFGNLISAAGGFLLAAQGSV), 36 to 56 (WWLLAATVVGLSLVVASGCAI), 85 to 105 (AALAHGVVLGLAGFALLWFCT), 108 to 128 (LATGCVLFGFVIYVGVYSLYM), 133 to 153 (VYGTLVGSLSGAVPPVAGYCA), 163 to 183 (AILLLMFSLWQMPHSYAIAIF), 209 to 229 (IVLYILAFAAATVMLVFGGYA), 230 to 250 (GYGYLAVAVATSLWWLKMALS), and 264 to 284 (QVFFFSIITITSLSVMMAVDG).

Belongs to the UbiA prenyltransferase family. Protoheme IX farnesyltransferase subfamily.

The protein resides in the cell inner membrane. It catalyses the reaction heme b + (2E,6E)-farnesyl diphosphate + H2O = Fe(II)-heme o + diphosphate. It functions in the pathway porphyrin-containing compound metabolism; heme O biosynthesis; heme O from protoheme: step 1/1. Its function is as follows. Converts heme B (protoheme IX) to heme O by substitution of the vinyl group on carbon 2 of heme B porphyrin ring with a hydroxyethyl farnesyl side group. In Chromobacterium violaceum (strain ATCC 12472 / DSM 30191 / JCM 1249 / CCUG 213 / NBRC 12614 / NCIMB 9131 / NCTC 9757 / MK), this protein is Protoheme IX farnesyltransferase 2.